A 470-amino-acid polypeptide reads, in one-letter code: Putative multidrug resistance protein MdtD (470 aa).

The Periplasmic segment spans residues 1-11; sequence MTELPDNTRWQ. The chain crosses the membrane as a helical span at residues 12-32; it reads LWIVAFGFFMQSLDTTIVNTA. The Cytoplasmic segment spans residues 33-48; sequence LPSMAKSLGESPLHMH. A helical membrane pass occupies residues 49–69; that stretch reads MVVVSYVLTVAVMLPASGWLA. At 70 to 76 the chain is on the periplasmic side; that stretch reads DKIGVRN. Residues 77 to 97 traverse the membrane as a helical segment; sequence IFFAAIVLFTLGSLFCALSGT. Residues 98–101 lie on the Cytoplasmic side of the membrane; sequence LNQL. Residues 102–124 form a helical membrane-spanning segment; it reads VLARVLQGVGGAMMVPVGRLTVM. Residues 125-137 are Periplasmic-facing; that stretch reads KIVPRTQYMAAMT. A helical membrane pass occupies residues 138 to 158; that stretch reads FVTLPGQIGPLLGPALGGVLV. Residues 159–164 lie on the Cytoplasmic side of the membrane; that stretch reads EYASWH. Residues 165-185 form a helical membrane-spanning segment; it reads WIFLINIPVGIVGAMATFMLM. Topologically, residues 186-196 are periplasmic; that stretch reads PNYTIETRRFD. Residues 197–217 traverse the membrane as a helical segment; the sequence is LPGFLLLAIGMAVLTLALDGS. The Cytoplasmic segment spans residues 218 to 224; sequence KSMGISP. A helical transmembrane segment spans residues 225–245; sequence WTLAGLAAGGAAAILLYLFHA. Residues 246 to 262 are Periplasmic-facing; sequence KKNSGALFSLRLFRTPT. The helical transmembrane segment at 263–283 threads the bilayer; it reads FSLGLLGSFAGRIGSGMLPFM. Topologically, residues 284–285 are cytoplasmic; that stretch reads TP. The helical transmembrane segment at 286–306 threads the bilayer; it reads VFLQIGLGFSPFHAGLMMIPM. At 307-341 the chain is on the periplasmic side; the sequence is VLGSMGMKRIVVQIVNRFGYRRVLVATTLGLALVS. Residues 342-362 form a helical membrane-spanning segment; it reads LLFMSVALLGWYYLLPLVLLL. Over 363 to 395 the chain is Cytoplasmic; it reads QGMVNSARFSSMNTLTLKDLPDTLASSGNSLLS. Residues 396 to 416 traverse the membrane as a helical segment; the sequence is MIMQLSMSIGVTIAGMLLGMF. Residues 417-430 lie on the Periplasmic side of the membrane; it reads GQQHIGIDSSATHH. Residues 431 to 451 form a helical membrane-spanning segment; sequence VFMYTWLCMAVIIALPAIIFA. Residues 452–470 are Cytoplasmic-facing; the sequence is RVPNDTQQNMVISRRKRSL.

This sequence belongs to the major facilitator superfamily. TCR/Tet family.

It localises to the cell inner membrane. This is Putative multidrug resistance protein MdtD from Salmonella dublin (strain CT_02021853).